Reading from the N-terminus, the 475-residue chain is Ribulose bisphosphate carboxylase large chain (475 aa).

The propeptide occupies 1-2 (MS). The residue at position 3 (Pro3) is an N-acetylproline. An N6,N6,N6-trimethyllysine modification is found at Lys14. 2 residues coordinate substrate: Asn123 and Thr173. Lys175 functions as the Proton acceptor in the catalytic mechanism. Lys177 is a substrate binding site. Mg(2+)-binding residues include Lys201, Asp203, and Glu204. Position 201 is an N6-carboxylysine (Lys201). His294 serves as the catalytic Proton acceptor. Residues Arg295, His327, and Ser379 each coordinate substrate.

The protein belongs to the RuBisCO large chain family. Type I subfamily. As to quaternary structure, heterohexadecamer of 8 large chains and 8 small chains; disulfide-linked. The disulfide link is formed within the large subunit homodimers. Mg(2+) serves as cofactor. Post-translationally, the disulfide bond which can form in the large chain dimeric partners within the hexadecamer appears to be associated with oxidative stress and protein turnover.

The protein localises to the plastid. Its subcellular location is the chloroplast. The enzyme catalyses 2 (2R)-3-phosphoglycerate + 2 H(+) = D-ribulose 1,5-bisphosphate + CO2 + H2O. It carries out the reaction D-ribulose 1,5-bisphosphate + O2 = 2-phosphoglycolate + (2R)-3-phosphoglycerate + 2 H(+). In terms of biological role, ruBisCO catalyzes two reactions: the carboxylation of D-ribulose 1,5-bisphosphate, the primary event in carbon dioxide fixation, as well as the oxidative fragmentation of the pentose substrate in the photorespiration process. Both reactions occur simultaneously and in competition at the same active site. The sequence is that of Ribulose bisphosphate carboxylase large chain from Liquidambar styraciflua (Sweetgum tree).